The sequence spans 408 residues: Imidazolonepropionase (408 aa).

Fe(3+)-binding residues include His-66 and His-68. Residues His-66 and His-68 each coordinate Zn(2+). Positions 75, 138, and 171 each coordinate 4-imidazolone-5-propanoate. Residue Tyr-138 coordinates N-formimidoyl-L-glutamate. Residue His-236 coordinates Fe(3+). His-236 contributes to the Zn(2+) binding site. Gln-239 is a 4-imidazolone-5-propanoate binding site. Residue Asp-311 coordinates Fe(3+). Asp-311 is a Zn(2+) binding site. Residues Asn-313 and Gly-315 each contribute to the N-formimidoyl-L-glutamate site. Ser-316 lines the 4-imidazolone-5-propanoate pocket.

This sequence belongs to the metallo-dependent hydrolases superfamily. HutI family. Zn(2+) serves as cofactor. Fe(3+) is required as a cofactor.

Its subcellular location is the cytoplasm. The catalysed reaction is 4-imidazolone-5-propanoate + H2O = N-formimidoyl-L-glutamate. It participates in amino-acid degradation; L-histidine degradation into L-glutamate; N-formimidoyl-L-glutamate from L-histidine: step 3/3. Catalyzes the hydrolytic cleavage of the carbon-nitrogen bond in imidazolone-5-propanoate to yield N-formimidoyl-L-glutamate. It is the third step in the universal histidine degradation pathway. The protein is Imidazolonepropionase of Idiomarina loihiensis (strain ATCC BAA-735 / DSM 15497 / L2-TR).